Here is a 522-residue protein sequence, read N- to C-terminus: N-acetylgalactosamine-6-sulfatase (522 aa).

The N-terminal stretch at 1-25 (MAPVAAATGWRLLLVLSAAGLGAAG) is a signal peptide. The interval 27–379 (PQPPNILLLL…PAMLGGQLTD (353 aa)) is catalytic domain. Asp-38, Asp-39, and Cys-78 together coordinate Ca(2+). Cys-78 serves as the catalytic Nucleophile. Position 78 is a 3-oxoalanine (Cys) (Cys-78). Residue His-141 is part of the active site. N-linked (GlcNAc...) asparagine glycosylation occurs at Asn-203. Positions 288 and 289 each coordinate Ca(2+). A disulfide bridge links Cys-308 with Cys-419. N-linked (GlcNAc...) asparagine glycosylation is present at Asn-423. 2 disulfides stabilise this stretch: Cys-489-Cys-518 and Cys-501-Cys-507.

The protein belongs to the sulfatase family. Homodimer. Ca(2+) is required as a cofactor. In terms of processing, the conversion to 3-oxoalanine (also known as C-formylglycine, FGly), of a serine or cysteine residue in prokaryotes and of a cysteine residue in eukaryotes, is critical for catalytic activity.

The protein resides in the lysosome. It catalyses the reaction Hydrolysis of the 6-sulfate groups of the N-acetyl-D-galactosamine 6-sulfate units of chondroitin sulfate and of the D-galactose 6-sulfate units of keratan sulfate.. This is N-acetylgalactosamine-6-sulfatase (GALNS) from Canis lupus familiaris (Dog).